Here is a 438-residue protein sequence, read N- to C-terminus: NADH-quinone oxidoreductase subunit D (438 aa).

This sequence belongs to the complex I 49 kDa subunit family. In terms of assembly, NDH-1 is composed of 14 different subunits. Subunits NuoB, C, D, E, F, and G constitute the peripheral sector of the complex.

Its subcellular location is the cell membrane. It carries out the reaction a quinone + NADH + 5 H(+)(in) = a quinol + NAD(+) + 4 H(+)(out). Functionally, NDH-1 shuttles electrons from NADH, via FMN and iron-sulfur (Fe-S) centers, to quinones in the respiratory chain. The immediate electron acceptor for the enzyme in this species is believed to be a menaquinone. Couples the redox reaction to proton translocation (for every two electrons transferred, four hydrogen ions are translocated across the cytoplasmic membrane), and thus conserves the redox energy in a proton gradient. In Rhodococcus jostii (strain RHA1), this protein is NADH-quinone oxidoreductase subunit D.